The chain runs to 347 residues: Isopentenyl-diphosphate delta-isomerase (347 aa).

9-10 (RK) lines the substrate pocket. Residues Ser67, 68 to 70 (SMT), Ser98, and Asn127 contribute to the FMN site. Substrate is bound at residue 98–100 (SQR). A substrate-binding site is contributed by Gln162. Glu163 is a Mg(2+) binding site. Residues Lys194, Thr224, 274–276 (GIR), and 295–296 (AA) each bind FMN.

This sequence belongs to the IPP isomerase type 2 family. Homooctamer. Dimer of tetramers. Requires FMN as cofactor. The cofactor is NADPH. Mg(2+) serves as cofactor.

The protein localises to the cytoplasm. The enzyme catalyses isopentenyl diphosphate = dimethylallyl diphosphate. In terms of biological role, involved in the biosynthesis of isoprenoids. Catalyzes the 1,3-allylic rearrangement of the homoallylic substrate isopentenyl (IPP) to its allylic isomer, dimethylallyl diphosphate (DMAPP). This is Isopentenyl-diphosphate delta-isomerase from Cronobacter sakazakii (strain ATCC BAA-894) (Enterobacter sakazakii).